The primary structure comprises 396 residues: Digeranylgeranylglycerophospholipid reductase (396 aa).

FAD contacts are provided by Gly-14, Glu-33, Cys-44, Gly-45, Gly-47, Arg-100, Ala-124, Glu-162, Asp-283, Gly-295, and Ile-296. Lys-338 and Val-374 together coordinate a 2,3-bis-O-(geranylgeranyl)-sn-glycerol 1-phospholipid.

Belongs to the geranylgeranyl reductase family. DGGGPL reductase subfamily. In terms of assembly, monomer. FAD serves as cofactor.

Its subcellular location is the cell membrane. It carries out the reaction 2,3-bis-O-(phytanyl)-sn-glycerol 1-phosphate + 8 NADP(+) = 2,3-bis-O-(geranylgeranyl)-sn-glycerol 1-phosphate + 8 NADPH + 8 H(+). The catalysed reaction is 2,3-bis-O-(phytanyl)-sn-glycerol 1-phosphate + 8 NAD(+) = 2,3-bis-O-(geranylgeranyl)-sn-glycerol 1-phosphate + 8 NADH + 8 H(+). The enzyme catalyses a 2,3-bis-O-phytanyl-sn-glycerol 1-phospholipid + 8 A = a 2,3-bis-O-(geranylgeranyl)-sn-glycerol 1-phospholipid + 8 AH2. It catalyses the reaction CDP-2,3-bis-O-(geranylgeranyl)-sn-glycerol + 8 AH2 = CDP-2,3-bis-O-(phytanyl)-sn-glycerol + 8 A. It carries out the reaction archaetidylserine + 8 AH2 = 2,3-bis-O-phytanyl-sn-glycero-3-phospho-L-serine + 8 A. It functions in the pathway membrane lipid metabolism; glycerophospholipid metabolism. Its function is as follows. Is involved in the reduction of 2,3-digeranylgeranylglycerophospholipids (unsaturated archaeols) into 2,3-diphytanylglycerophospholipids (saturated archaeols) in the biosynthesis of archaeal membrane lipids. Catalyzes the formation of archaetidic acid (2,3-di-O-phytanyl-sn-glyceryl phosphate) from 2,3-di-O-geranylgeranylglyceryl phosphate (DGGGP) via the hydrogenation of each double bond of the isoprenoid chains. Can use both NADH and NADPH as electron donors. Also catalyzes the reduction of 2,3-di-O-geranylgeranylglyceryl phosphate analogs such as 2,3-di-O-phytyl-sn-glyceryl phosphate (DPHGP), 3-O-(2,3-di-O-phytyl-sn-glycero-phospho)-sn-glycerol (DPHGPG) and 2,3-di-O-phytyl-sn-glycero-phosphoethanolamine (DPHGPE). Is not active toward 2,3-di-O-geranylgeranylglycerol. Is also probably able to reduce double bonds of geranyl groups in CDP-2,3-bis-O-(geranylgeranyl)-sn-glycerol and archaetidylserine, thus acting at various stages in the biosynthesis of archaeal membrane lipids. In Thermoplasma acidophilum (strain ATCC 25905 / DSM 1728 / JCM 9062 / NBRC 15155 / AMRC-C165), this protein is Digeranylgeranylglycerophospholipid reductase.